Consider the following 327-residue polypeptide: UDP-N-acetylenolpyruvoylglucosamine reductase (327 aa).

The 182-residue stretch at 42-223 (RTGGLAELFY…RAAMDEVALH (182 aa)) folds into the FAD-binding PCMH-type domain. Arg-188 is a catalytic residue. Ser-237 functions as the Proton donor in the catalytic mechanism. The active site involves Glu-307.

The protein belongs to the MurB family. FAD is required as a cofactor.

The protein localises to the cytoplasm. It carries out the reaction UDP-N-acetyl-alpha-D-muramate + NADP(+) = UDP-N-acetyl-3-O-(1-carboxyvinyl)-alpha-D-glucosamine + NADPH + H(+). It functions in the pathway cell wall biogenesis; peptidoglycan biosynthesis. Its function is as follows. Cell wall formation. This is UDP-N-acetylenolpyruvoylglucosamine reductase from Bartonella tribocorum (strain CIP 105476 / IBS 506).